The sequence spans 169 residues: Cytochrome c oxidase subunit 4 isoform 1, mitochondrial (169 aa).

Residues 1-22 (MLATRALSLIGKRAISTSVCLR) constitute a mitochondrion transit peptide. Residues 23–98 (AHGSVVKSED…SFAEMNKGTN (76 aa)) are Mitochondrial matrix-facing. Lys29 bears the N6-acetyllysine; alternate mark. Lys29 is modified (N6-succinyllysine; alternate). An N6-acetyllysine modification is found at Lys53. Phosphoserine occurs at positions 56 and 58. At Lys60 the chain carries N6-acetyllysine; alternate. Residue Lys60 is modified to N6-succinyllysine; alternate. Lys67 is modified (N6-acetyllysine). A helical membrane pass occupies residues 99–124 (EWKTVVGLAMFFIGFTALVLIWEKSY). The Mitochondrial intermembrane portion of the chain corresponds to 125–169 (VYGPIPHTFDRDWVAMQTKRMLDMKVNPIQGFSAKWDYNKNEWKK).

This sequence belongs to the cytochrome c oxidase IV family. In terms of assembly, component of the cytochrome c oxidase (complex IV, CIV), a multisubunit enzyme composed of 14 subunits. The complex is composed of a catalytic core of 3 subunits MT-CO1, MT-CO2 and MT-CO3, encoded in the mitochondrial DNA, and 11 supernumerary subunits COX4I, COX5A, COX5B, COX6A, COX6B, COX6C, COX7A, COX7B, COX7C, COX8 and NDUFA4, which are encoded in the nuclear genome. The complex exists as a monomer or a dimer and forms supercomplexes (SCs) in the inner mitochondrial membrane with NADH-ubiquinone oxidoreductase (complex I, CI) and ubiquinol-cytochrome c oxidoreductase (cytochrome b-c1 complex, complex III, CIII), resulting in different assemblies (supercomplex SCI(1)III(2)IV(1) and megacomplex MCI(2)III(2)IV(2)). Interacts with PHB2; the interaction decreases in absence of SPHK2. Interacts with AFG1L. Interacts with ABCB7; this interaction allows the regulation of cellular iron homeostasis and cellular reactive oxygen species (ROS) levels in cardiomyocytes. Interacts with FLVCR2; this interaction occurs in the absence of heme and is disrupted upon heme binding. Interacts with IRGC.

The protein localises to the mitochondrion inner membrane. The protein operates within energy metabolism; oxidative phosphorylation. Component of the cytochrome c oxidase, the last enzyme in the mitochondrial electron transport chain which drives oxidative phosphorylation. The respiratory chain contains 3 multisubunit complexes succinate dehydrogenase (complex II, CII), ubiquinol-cytochrome c oxidoreductase (cytochrome b-c1 complex, complex III, CIII) and cytochrome c oxidase (complex IV, CIV), that cooperate to transfer electrons derived from NADH and succinate to molecular oxygen, creating an electrochemical gradient over the inner membrane that drives transmembrane transport and the ATP synthase. Cytochrome c oxidase is the component of the respiratory chain that catalyzes the reduction of oxygen to water. Electrons originating from reduced cytochrome c in the intermembrane space (IMS) are transferred via the dinuclear copper A center (CU(A)) of subunit 2 and heme A of subunit 1 to the active site in subunit 1, a binuclear center (BNC) formed by heme A3 and copper B (CU(B)). The BNC reduces molecular oxygen to 2 water molecules using 4 electrons from cytochrome c in the IMS and 4 protons from the mitochondrial matrix. The polypeptide is Cytochrome c oxidase subunit 4 isoform 1, mitochondrial (Cox4i1) (Rattus norvegicus (Rat)).